The sequence spans 554 residues: Glucose-6-phosphate isomerase (554 aa).

The active-site Proton donor is glutamate 359. Residues histidine 390 and lysine 518 contribute to the active site.

Belongs to the GPI family.

It is found in the cytoplasm. The enzyme catalyses alpha-D-glucose 6-phosphate = beta-D-fructose 6-phosphate. The protein operates within carbohydrate biosynthesis; gluconeogenesis. It functions in the pathway carbohydrate degradation; glycolysis; D-glyceraldehyde 3-phosphate and glycerone phosphate from D-glucose: step 2/4. In terms of biological role, catalyzes the reversible isomerization of glucose-6-phosphate to fructose-6-phosphate. The protein is Glucose-6-phosphate isomerase of Pseudomonas fluorescens.